A 514-amino-acid polypeptide reads, in one-letter code: Threonine synthase (514 aa).

An N6-(pyridoxal phosphate)lysine modification is found at Lys124. Pyridoxal 5'-phosphate-binding residues include Gly277, Asn278, Phe279, Asp281, and Thr449. The residue at position 467 (Ser467) is a Phosphoserine.

Belongs to the threonine synthase family. Requires pyridoxal 5'-phosphate as cofactor.

The enzyme catalyses O-phospho-L-homoserine + H2O = L-threonine + phosphate. The protein operates within amino-acid biosynthesis; L-threonine biosynthesis; L-threonine from L-aspartate: step 5/5. Catalyzes the gamma-elimination of phosphate from L-phosphohomoserine and the beta-addition of water to produce L-threonine. In Saccharomyces cerevisiae (strain ATCC 204508 / S288c) (Baker's yeast), this protein is Threonine synthase (THR4).